Here is an 82-residue protein sequence, read N- to C-terminus: Protein C2 (82 aa).

The polypeptide is Protein C2 (C2) (Sterkiella nova (Ciliate)).